The sequence spans 330 residues: Putative [LysW]-L-2-aminoadipate/[LysW]-L-glutamate phosphate reductase (330 aa).

10–13 (SGYI) is a binding site for NADP(+). Cysteine 142 is a catalytic residue. Asparagine 297 contributes to the NADP(+) binding site.

The protein belongs to the NAGSA dehydrogenase family. Type 1 subfamily. LysY sub-subfamily.

The protein localises to the cytoplasm. It carries out the reaction [amino-group carrier protein]-C-terminal-N-(1-carboxy-5-oxopentan-1-yl)-L-glutamine + phosphate + NADP(+) = [amino-group carrier protein]-C-terminal-N-(1-carboxy-5-phosphooxy-5-oxopentan-1-yl)-L-glutamine + NADPH + H(+). The catalysed reaction is [amino-group carrier protein]-C-terminal-gamma-(L-glutamyl-5-semialdehyde)-L-glutamate + phosphate + NADP(+) = [amino-group carrier protein]-C-terminal-gamma-(5-phospho-L-glutamyl)-L-glutamate + NADPH + H(+). It participates in amino-acid biosynthesis; L-lysine biosynthesis via AAA pathway; L-lysine from L-alpha-aminoadipate (Thermus route): step 3/5. The protein operates within amino-acid biosynthesis; L-arginine biosynthesis. Functionally, involved in both the arginine and lysine biosynthetic pathways. The polypeptide is Putative [LysW]-L-2-aminoadipate/[LysW]-L-glutamate phosphate reductase (Pyrococcus furiosus (strain ATCC 43587 / DSM 3638 / JCM 8422 / Vc1)).